We begin with the raw amino-acid sequence, 190 residues long: Xanthine phosphoribosyltransferase 1 (190 aa).

2 residues coordinate xanthine: leucine 20 and asparagine 27. Residue 129 to 133 coordinates 5-phospho-alpha-D-ribose 1-diphosphate; sequence AQGCA. Lysine 157 serves as a coordination point for xanthine.

It belongs to the purine/pyrimidine phosphoribosyltransferase family. Xpt subfamily. In terms of assembly, homodimer.

It localises to the cytoplasm. It catalyses the reaction XMP + diphosphate = xanthine + 5-phospho-alpha-D-ribose 1-diphosphate. It functions in the pathway purine metabolism; XMP biosynthesis via salvage pathway; XMP from xanthine: step 1/1. Its function is as follows. Converts the preformed base xanthine, a product of nucleic acid breakdown, to xanthosine 5'-monophosphate (XMP), so it can be reused for RNA or DNA synthesis. The chain is Xanthine phosphoribosyltransferase 1 from Clostridium perfringens (strain ATCC 13124 / DSM 756 / JCM 1290 / NCIMB 6125 / NCTC 8237 / Type A).